The primary structure comprises 147 residues: Deoxyuridine 5'-triphosphate nucleotidohydrolase (147 aa).

Residues 67 to 69 (RSG), N80, and 84 to 86 (TID) contribute to the substrate site.

It belongs to the dUTPase family. Requires Mg(2+) as cofactor.

The enzyme catalyses dUTP + H2O = dUMP + diphosphate + H(+). Its pathway is pyrimidine metabolism; dUMP biosynthesis; dUMP from dCTP (dUTP route): step 2/2. Its function is as follows. This enzyme is involved in nucleotide metabolism: it produces dUMP, the immediate precursor of thymidine nucleotides and it decreases the intracellular concentration of dUTP so that uracil cannot be incorporated into DNA. This chain is Deoxyuridine 5'-triphosphate nucleotidohydrolase, found in Syntrophotalea carbinolica (strain DSM 2380 / NBRC 103641 / GraBd1) (Pelobacter carbinolicus).